The sequence spans 163 residues: uncharacterized protein (163 aa).

The interval 142–163 (PQIVISEHNNTKETSPSRQFEH) is disordered. Residues 153 to 163 (KETSPSRQFEH) show a composition bias toward polar residues.

The protein belongs to the RCAN family.

In terms of biological role, inhibits calcineurin-dependent transcriptional responses by binding to the catalytic domain of calcineurin. This is an uncharacterized protein from Schizosaccharomyces pombe (strain 972 / ATCC 24843) (Fission yeast).